Here is a 243-residue protein sequence, read N- to C-terminus: MTTSSIEPRNSYKRVMLKLGGEMFGGGKVGIDPDVVDNVARQIAEVAKSGAEIAVVIGGGNFFRGAELQQRGMDRARSDYMGMLGTVMNCLALQDFLGQHGVECRVQTAINMAQVAEPYLPLRAERHLEKGRVVIFGAGMGMPYFSTDTTAAQRALEIGCDVLLMAKAVDGVYSADPRTNPDAELFTEITPKEVIEKSLKVADATAFSLCMDNNMPILVFNLLTDGNIARAVNGERIGTLVQS.

An ATP-binding site is contributed by 18–21 (KLGG). A UMP-binding site is contributed by Gly59. Residues Gly60 and Arg64 each contribute to the ATP site. Residues Asp79 and 140-147 (MGMPYFST) each bind UMP. ATP is bound by residues Tyr173 and Asp176.

Belongs to the UMP kinase family. Homohexamer.

It localises to the cytoplasm. The enzyme catalyses UMP + ATP = UDP + ADP. It participates in pyrimidine metabolism; CTP biosynthesis via de novo pathway; UDP from UMP (UMPK route): step 1/1. Inhibited by UTP. In terms of biological role, catalyzes the reversible phosphorylation of UMP to UDP. This chain is Uridylate kinase, found in Corynebacterium efficiens (strain DSM 44549 / YS-314 / AJ 12310 / JCM 11189 / NBRC 100395).